The chain runs to 230 residues: Large ribosomal subunit protein uL1 (230 aa).

It belongs to the universal ribosomal protein uL1 family. Part of the 50S ribosomal subunit.

Functionally, binds directly to 23S rRNA. The L1 stalk is quite mobile in the ribosome, and is involved in E site tRNA release. In terms of biological role, protein L1 is also a translational repressor protein, it controls the translation of the L11 operon by binding to its mRNA. The polypeptide is Large ribosomal subunit protein uL1 (Rubrobacter xylanophilus (strain DSM 9941 / JCM 11954 / NBRC 16129 / PRD-1)).